A 115-amino-acid chain; its full sequence is Na(+)/H(+) antiporter subunit C1 (115 aa).

Transmembrane regions (helical) follow at residues 1-21, 28-48, and 72-92; these read MEILMIFVCGILTAMSVYLIL, IIIGTTLQTHTANLFLITMGG, and LILTAIVISFSVTAFFLVLAF.

Belongs to the CPA3 antiporters (TC 2.A.63) subunit C family. In terms of assembly, may form a heterooligomeric complex that consists of seven subunits: mnhA1, mnhB1, mnhC1, mnhD1, mnhE1, mnhF1 and mnhG1.

Its subcellular location is the cell membrane. Mnh complex is a Na(+)/H(+) antiporter involved in Na(+) excretion. This chain is Na(+)/H(+) antiporter subunit C1 (mnhC1), found in Staphylococcus saprophyticus subsp. saprophyticus (strain ATCC 15305 / DSM 20229 / NCIMB 8711 / NCTC 7292 / S-41).